Consider the following 714-residue polypeptide: Cadherin-13 (714 aa).

Residues 1–22 (MQPRTPLTLCVLLSQVLLVTSA) form the signal peptide. Positions 23-138 (DDLECTPGFQ…RTSPVPRQKR (116 aa)) are excised as a propeptide. Cadherin domains follow at residues 143-245 (SPIL…RPIF), 246-363 (REGP…SPKF), 364-477 (TKKE…GPVF), 478-585 (YPDP…APVI), and 586-680 (YPTV…VQVC). Residues 156–183 (PRDVGKVVDSDRPEGSKFRLTGKGVDQD) form a disordered region. A compositionally biased stretch (basic and acidic residues) spans 158-172 (DVGKVVDSDRPEGSK). N-linked (GlcNAc...) asparagine glycosylation is found at Asn-382, Asn-489, Asn-500, Asn-530, Asn-598, Asn-638, and Asn-671. Residue Gly-693 is the site of GPI-anchor amidated glycine attachment. The propeptide at 694–714 (ALHLSLSLLLLFSLLSLLSGL) is removed in mature form.

In terms of assembly, by contrast to classical cadherins, homodimerization in trans is not mediated by cadherin EC1 domain strand-swapping, but instead through a homophilic adhesive interface which joins two elongated EC1-EC2 domains through a region near their Ca2+-binding sites to form a tetrahedral, X-like shape.

The protein localises to the cell membrane. It localises to the cytoplasm. Cadherins are calcium-dependent cell adhesion proteins. They preferentially interact with themselves in a homophilic manner in connecting cells; cadherins may thus contribute to the sorting of heterogeneous cell types. May act as a negative regulator of neural cell growth. The sequence is that of Cadherin-13 (Cdh13) from Mus musculus (Mouse).